Here is a 226-residue protein sequence, read N- to C-terminus: AA9 family lytic polysaccharide monooxygenase E (226 aa).

Residues 1-18 (MLANGAIVFLAAALGVSG) form the signal peptide. Position 19 (H19) interacts with Cu(2+). Intrachain disulfides connect C56/C174 and C144/C226. The N-linked (GlcNAc...) asparagine glycan is linked to N69. H86 serves as a coordination point for Cu(2+). O2 is bound by residues H160 and Q169. Y171 contacts Cu(2+).

It belongs to the polysaccharide monooxygenase AA9 family. Cu(2+) serves as cofactor.

It localises to the secreted. It catalyses the reaction [(1-&gt;4)-beta-D-glucosyl]n+m + reduced acceptor + O2 = 4-dehydro-beta-D-glucosyl-[(1-&gt;4)-beta-D-glucosyl]n-1 + [(1-&gt;4)-beta-D-glucosyl]m + acceptor + H2O.. Its function is as follows. Lytic polysaccharide monooxygenase (LPMO) that depolymerizes crystalline and amorphous polysaccharides via the oxidation of scissile alpha- or beta-(1-4)-glycosidic bonds, yielding C1 and C4 oxidation products. Catalysis by LPMOs requires the reduction of the active-site copper from Cu(II) to Cu(I) by a reducing agent and H(2)O(2) or O(2) as a cosubstrate. Shows endoglucanase activity on tamarind xyloglucan, as well as on beechwood xylan when combined with phosphoric acid swollen cellulose (PASC). Shows no activity on wheat arabinoxylan, konjac glucomannan, acetylated spruce galactoglucomannan, or cellopentaose. This is AA9 family lytic polysaccharide monooxygenase E from Thermothielavioides terrestris (strain ATCC 38088 / NRRL 8126) (Thielavia terrestris).